Consider the following 829-residue polypeptide: Leucine--tRNA ligase (829 aa).

A 'HIGH' region motif is present at residues 34-44 (PYPSGNIHMGH). The 'KMSKS' region signature appears at 591–595 (KMSKS). Residue K594 coordinates ATP.

This sequence belongs to the class-I aminoacyl-tRNA synthetase family.

The protein resides in the cytoplasm. The enzyme catalyses tRNA(Leu) + L-leucine + ATP = L-leucyl-tRNA(Leu) + AMP + diphosphate. The sequence is that of Leucine--tRNA ligase from Ehrlichia chaffeensis (strain ATCC CRL-10679 / Arkansas).